Reading from the N-terminus, the 193-residue chain is Capsid protein (193 aa).

It localises to the virion. This Apple chlorotic leaf spot virus (isolate apple) (ACLSV) protein is Capsid protein.